A 461-amino-acid polypeptide reads, in one-letter code: Argininosuccinate lyase (461 aa).

This sequence belongs to the lyase 1 family. Argininosuccinate lyase subfamily.

Its subcellular location is the cytoplasm. It catalyses the reaction 2-(N(omega)-L-arginino)succinate = fumarate + L-arginine. Its pathway is amino-acid biosynthesis; L-arginine biosynthesis; L-arginine from L-ornithine and carbamoyl phosphate: step 3/3. This is Argininosuccinate lyase from Desulfitobacterium hafniense (strain DSM 10664 / DCB-2).